Consider the following 269-residue polypeptide: uncharacterized protein (269 aa).

Positions Gln-181–Ala-191 are enriched in basic and acidic residues. A disordered region spans residues Gln-181 to Gly-203. Polar residues predominate over residues Ser-193–Met-202. Phosphoserine is present on Ser-200.

This is an uncharacterized protein from Schizosaccharomyces pombe (strain 972 / ATCC 24843) (Fission yeast).